The following is a 308-amino-acid chain: Aspartate carbamoyltransferase catalytic subunit (308 aa).

R57 and T58 together coordinate carbamoyl phosphate. Residue K86 participates in L-aspartate binding. Carbamoyl phosphate-binding residues include R107, H135, and Q138. Residues R168 and R229 each coordinate L-aspartate. Carbamoyl phosphate is bound by residues L268 and P269.

It belongs to the aspartate/ornithine carbamoyltransferase superfamily. ATCase family. Heterooligomer of catalytic and regulatory chains.

The enzyme catalyses carbamoyl phosphate + L-aspartate = N-carbamoyl-L-aspartate + phosphate + H(+). It participates in pyrimidine metabolism; UMP biosynthesis via de novo pathway; (S)-dihydroorotate from bicarbonate: step 2/3. Functionally, catalyzes the condensation of carbamoyl phosphate and aspartate to form carbamoyl aspartate and inorganic phosphate, the committed step in the de novo pyrimidine nucleotide biosynthesis pathway. This chain is Aspartate carbamoyltransferase catalytic subunit, found in Thermococcus gammatolerans (strain DSM 15229 / JCM 11827 / EJ3).